Reading from the N-terminus, the 300-residue chain is F-box protein PP2-A15 (300 aa).

Residues 17-63 (MGPGLGDIPESCVACVFMYLTPPEICNLAGLNRSFRGAASSDSVWEK) enclose the F-box domain.

The polypeptide is F-box protein PP2-A15 (PP2A15) (Arabidopsis thaliana (Mouse-ear cress)).